The following is a 181-amino-acid chain: Inner membrane-spanning protein YciB (181 aa).

Helical transmembrane passes span 10 to 30, 50 to 70, 80 to 100, 120 to 140, and 148 to 168; these read LIIF…GALI, MQLI…ALHD, IVYV…KPAI, WAWV…AYHL, and FKVF…GGYI.

The protein belongs to the YciB family.

It localises to the cell inner membrane. Plays a role in cell envelope biogenesis, maintenance of cell envelope integrity and membrane homeostasis. This chain is Inner membrane-spanning protein YciB, found in Vibrio cholerae serotype O1 (strain ATCC 39315 / El Tor Inaba N16961).